The primary structure comprises 38 residues: MKVRPSVKPMCEHCKIIKRQGRVMVICSANPKHKQRQG.

Belongs to the bacterial ribosomal protein bL36 family.

The chain is Large ribosomal subunit protein bL36 from Lactobacillus johnsonii (strain CNCM I-12250 / La1 / NCC 533).